Reading from the N-terminus, the 955-residue chain is MAM domain-containing glycosylphosphatidylinositol anchor protein 1 (955 aa).

A signal peptide spans 1 to 18 (MEVTCLLLLALIPFHCRG). Ig-like domains are found at residues 24 to 123 (PAQA…KSIR) and 132 to 230 (PMLT…KAIT). 2 N-linked (GlcNAc...) asparagine glycosylation sites follow: asparagine 42 and asparagine 90. 2 cysteine pairs are disulfide-bonded: cysteine 60–cysteine 108 and cysteine 157–cysteine 214. Residues asparagine 235, asparagine 247, asparagine 257, asparagine 307, and asparagine 331 are each glycosylated (N-linked (GlcNAc...) asparagine). Positions 240-323 (PALKLSVNET…VGNPAKKTVN (84 aa)) constitute an Ig-like 3 domain. Cysteine 262 and cysteine 308 are joined by a disulfide. Ig-like domains are found at residues 338-432 (PDVI…VEVN), 440-532 (PTIS…AQVQ), and 539-631 (PEVE…FQVS). A disulfide bridge links cysteine 357 with cysteine 415. N-linked (GlcNAc...) asparagine glycosylation occurs at asparagine 432. Cystine bridges form between cysteine 463-cysteine 514 and cysteine 560-cysteine 615. Residues 643–743 (TPNPTRSHKL…SRIIHYTEPI (101 aa)) enclose the Fibronectin type-III domain. N-linked (GlcNAc...) asparagine glycans are attached at residues asparagine 655 and asparagine 747. The MAM domain maps to 751-918 (NTCHFEDEKI…VTLKKGECPR (168 aa)). The segment covering 779–788 (LTQNPKRSPN) has biased composition (polar residues). The segment at 779–798 (LTQNPKRSPNTGPPTDISGT) is disordered. Asparagine 826 is a glycosylation site (N-linked (GlcNAc...) asparagine). A lipid anchor (GPI-anchor amidated serine) is attached at serine 932. Residues 933–955 (GAPCQSSPQLWGPMAIFLLALQR) constitute a propeptide, removed in mature form.

Interacts heterophilically through its MAM domain with proteins in axon-rich regions and through its Ig-like domains with proteins in differentiating muscle. Interacts (through the Ig-like domains) with NLGN2. Has been found in brain, heart, skeletal muscle and kidney. Found to be overexpressed in tumor tissues.

It localises to the cell membrane. Its function is as follows. Required for radial migration of cortical neurons in the superficial layer of the neocortex. Plays a role in the formation or maintenance of inhibitory synapses. May function by inhibiting the activity of NLGN2. This chain is MAM domain-containing glycosylphosphatidylinositol anchor protein 1 (MDGA1), found in Homo sapiens (Human).